The sequence spans 581 residues: A-type ATP synthase subunit A (581 aa).

234–241 (GPFGSGKT) provides a ligand contact to ATP.

This sequence belongs to the ATPase alpha/beta chains family. Has multiple subunits with at least A(3), B(3), C, D, E, F, H, I and proteolipid K(x).

It is found in the cell membrane. It catalyses the reaction ATP + H2O + 4 H(+)(in) = ADP + phosphate + 5 H(+)(out). Component of the A-type ATP synthase that produces ATP from ADP in the presence of a proton gradient across the membrane. The A chain is the catalytic subunit. This is A-type ATP synthase subunit A from Archaeoglobus fulgidus (strain ATCC 49558 / DSM 4304 / JCM 9628 / NBRC 100126 / VC-16).